The chain runs to 314 residues: Dihydroorotate dehydrogenase (fumarate) (314 aa).

FMN-binding positions include Ala-21 and 45 to 46; that span reads KS. Residues Lys-45, 69-73, and Asn-129 each bind substrate; that span reads NSMGL. Asn-129 serves as a coordination point for FMN. Cys-132 acts as the Nucleophile in catalysis. Asn-134 contacts substrate. FMN contacts are provided by Lys-166 and Val-195. 196-197 provides a ligand contact to substrate; the sequence is NS. FMN contacts are provided by residues Gly-224, 251 to 252, and 273 to 274; these read GG and GT.

Belongs to the dihydroorotate dehydrogenase family. Type 1 subfamily. Homodimer. The cofactor is FMN.

It is found in the cytoplasm. It carries out the reaction (S)-dihydroorotate + fumarate = orotate + succinate. It participates in pyrimidine metabolism; UMP biosynthesis via de novo pathway. Its function is as follows. Catalyzes the conversion of dihydroorotate to orotate with fumarate as the electron acceptor. Molecular oxygen can replace fumarate in vitro. This chain is Dihydroorotate dehydrogenase (fumarate) (pyr4), found in Trypanosoma cruzi (strain CL Brener).